We begin with the raw amino-acid sequence, 731 residues long: Fatty acid oxidation complex subunit alpha (731 aa).

Residues 15–204 (TEKTSAFSLT…RQGLVDEAVP (190 aa)) are enoyl-CoA hydratase. A 3-hydroxyacyl-CoA dehydrogenase region spans residues 320–729 (KPIHRVGILG…FYPPADKDNS (410 aa)).

It in the N-terminal section; belongs to the enoyl-CoA hydratase/isomerase family. The protein in the central section; belongs to the 3-hydroxyacyl-CoA dehydrogenase family. Heterotetramer of two alpha chains (FadJ) and two beta chains (FadI).

It is found in the cytoplasm. The catalysed reaction is a (3S)-3-hydroxyacyl-CoA = a (2E)-enoyl-CoA + H2O. The enzyme catalyses a 4-saturated-(3S)-3-hydroxyacyl-CoA = a (3E)-enoyl-CoA + H2O. It catalyses the reaction a (3S)-3-hydroxyacyl-CoA + NAD(+) = a 3-oxoacyl-CoA + NADH + H(+). It carries out the reaction (3S)-3-hydroxybutanoyl-CoA = (3R)-3-hydroxybutanoyl-CoA. The protein operates within lipid metabolism; fatty acid beta-oxidation. In terms of biological role, catalyzes the formation of a hydroxyacyl-CoA by addition of water on enoyl-CoA. Also exhibits 3-hydroxyacyl-CoA epimerase and 3-hydroxyacyl-CoA dehydrogenase activities. This Pectobacterium atrosepticum (strain SCRI 1043 / ATCC BAA-672) (Erwinia carotovora subsp. atroseptica) protein is Fatty acid oxidation complex subunit alpha.